The chain runs to 772 residues: 5-methyltetrahydropteroyltriglutamate--homocysteine methyltransferase (772 aa).

5-methyltetrahydropteroyltri-L-glutamate is bound by residues 24-27 and lysine 120; that span reads RELK. L-homocysteine-binding positions include 446 to 448 and glutamate 499; that span reads IGS. L-methionine is bound by residues 446–448 and glutamate 499; that span reads IGS. Position 576 (tryptophan 576) interacts with 5-methyltetrahydropteroyltri-L-glutamate. Aspartate 614 provides a ligand contact to L-homocysteine. Aspartate 614 contacts L-methionine. Glutamate 620 contributes to the 5-methyltetrahydropteroyltri-L-glutamate binding site. Positions 656, 658, and 680 each coordinate Zn(2+). The active-site Proton donor is the histidine 709. Cysteine 741 contacts Zn(2+).

This sequence belongs to the vitamin-B12 independent methionine synthase family. Zn(2+) is required as a cofactor.

The catalysed reaction is 5-methyltetrahydropteroyltri-L-glutamate + L-homocysteine = tetrahydropteroyltri-L-glutamate + L-methionine. It participates in amino-acid biosynthesis; L-methionine biosynthesis via de novo pathway; L-methionine from L-homocysteine (MetE route): step 1/1. Its function is as follows. Catalyzes the transfer of a methyl group from 5-methyltetrahydrofolate to homocysteine resulting in methionine formation. This Streptomyces coelicolor (strain ATCC BAA-471 / A3(2) / M145) protein is 5-methyltetrahydropteroyltriglutamate--homocysteine methyltransferase.